The sequence spans 130 residues: Small ribosomal subunit protein uS9 (130 aa).

This sequence belongs to the universal ribosomal protein uS9 family.

This chain is Small ribosomal subunit protein uS9, found in Xanthomonas oryzae pv. oryzae (strain MAFF 311018).